The chain runs to 300 residues: Dihydroorotate dehydrogenase B (NAD(+)), catalytic subunit (300 aa).

Residues serine 20 and 44 to 45 (KG) each bind FMN. Substrate is bound by residues lysine 44 and 68-72 (NSVGL). Positions 98 and 124 each coordinate FMN. Residue asparagine 124 participates in substrate binding. Cysteine 127 serves as the catalytic Nucleophile. Positions 162 and 188 each coordinate FMN. 189–190 (NT) lines the substrate pocket. FMN-binding positions include glycine 214, 240-241 (GG), and 262-263 (GT).

Belongs to the dihydroorotate dehydrogenase family. Type 1 subfamily. Heterotetramer of 2 PyrK and 2 PyrD type B subunits. The cofactor is FMN.

The protein resides in the cytoplasm. The enzyme catalyses (S)-dihydroorotate + NAD(+) = orotate + NADH + H(+). It functions in the pathway pyrimidine metabolism; UMP biosynthesis via de novo pathway; orotate from (S)-dihydroorotate (NAD(+) route): step 1/1. Its function is as follows. Catalyzes the conversion of dihydroorotate to orotate with NAD(+) as electron acceptor. This chain is Dihydroorotate dehydrogenase B (NAD(+)), catalytic subunit (pyrD), found in Caldicellulosiruptor bescii (strain ATCC BAA-1888 / DSM 6725 / KCTC 15123 / Z-1320) (Anaerocellum thermophilum).